Reading from the N-terminus, the 252-residue chain is 2-succinyl-6-hydroxy-2,4-cyclohexadiene-1-carboxylate synthase (252 aa).

The protein belongs to the AB hydrolase superfamily. MenH family. Monomer.

The enzyme catalyses 5-enolpyruvoyl-6-hydroxy-2-succinyl-cyclohex-3-ene-1-carboxylate = (1R,6R)-6-hydroxy-2-succinyl-cyclohexa-2,4-diene-1-carboxylate + pyruvate. It functions in the pathway quinol/quinone metabolism; 1,4-dihydroxy-2-naphthoate biosynthesis; 1,4-dihydroxy-2-naphthoate from chorismate: step 3/7. Its pathway is quinol/quinone metabolism; menaquinone biosynthesis. In terms of biological role, catalyzes a proton abstraction reaction that results in 2,5-elimination of pyruvate from 2-succinyl-5-enolpyruvyl-6-hydroxy-3-cyclohexene-1-carboxylate (SEPHCHC) and the formation of 2-succinyl-6-hydroxy-2,4-cyclohexadiene-1-carboxylate (SHCHC). This chain is 2-succinyl-6-hydroxy-2,4-cyclohexadiene-1-carboxylate synthase, found in Salmonella enteritidis PT4 (strain P125109).